We begin with the raw amino-acid sequence, 130 residues long: Small ribosomal subunit protein uS8 (130 aa).

It belongs to the universal ribosomal protein uS8 family. In terms of assembly, part of the 30S ribosomal subunit.

Its function is as follows. One of the primary rRNA binding proteins, it binds directly to 16S rRNA central domain where it helps coordinate assembly of the platform of the 30S subunit. In Methanococcus vannielii (strain ATCC 35089 / DSM 1224 / JCM 13029 / OCM 148 / SB), this protein is Small ribosomal subunit protein uS8.